Here is a 435-residue protein sequence, read N- to C-terminus: ATP-dependent protease ATPase subunit HslU (435 aa).

ATP contacts are provided by residues Ile-18, 60 to 65, Asp-248, Glu-313, and Arg-385; that span reads GVGKTE.

Belongs to the ClpX chaperone family. HslU subfamily. A double ring-shaped homohexamer of HslV is capped on each side by a ring-shaped HslU homohexamer. The assembly of the HslU/HslV complex is dependent on binding of ATP.

It is found in the cytoplasm. Its function is as follows. ATPase subunit of a proteasome-like degradation complex; this subunit has chaperone activity. The binding of ATP and its subsequent hydrolysis by HslU are essential for unfolding of protein substrates subsequently hydrolyzed by HslV. HslU recognizes the N-terminal part of its protein substrates and unfolds these before they are guided to HslV for hydrolysis. This Rhizobium etli (strain CIAT 652) protein is ATP-dependent protease ATPase subunit HslU.